Consider the following 307-residue polypeptide: DNA damage tolerance protein rad31 (307 aa).

Its function is as follows. Could be involved in a ubiquitin-related process important for DNA damage tolerance. Acts in a process which is defective in the checkpoint rad mutants and which involves hus5. The polypeptide is DNA damage tolerance protein rad31 (rad31) (Schizosaccharomyces pombe (strain 972 / ATCC 24843) (Fission yeast)).